Reading from the N-terminus, the 473-residue chain is MKVELVFIPSPGVGHIRATTALAKLLVASDNRLSVTLIVIPSRVSDDASSSVYTNSEDRLRYILLPARDQTTDLVSYIDSQKPQVRAVVSKVAGDVSTRSDSRLAGIVVDMFCTSMIDIADEFNLSAYIFYTSNASYLGLQFHVQSLYDEKELDVSEFKDTEMKFDVPTLTQPFPAKCLPSVMLNKKWFPYVLGRARSFRATKGILVNSVADMEPQALSFFSGGNGNTNIPPVYAVGPIMDLESSGDEEKRKEILHWLKEQPTKSVVFLCFGSMGGFSEEQAREIAVALERSGHRFLWSLRRASPVGNKSNPPPGEFTNLEEILPKGFLDRTVEIGKIISWAPQVDVLNSPAIGAFVTHCGWNSILESLWFGVPMAAWPIYAEQQFNAFHMVDELGLAAEVKKEYRRDFLVEEPEIVTADEIERGIKCAMEQDSKMRKRVMEMKDKLHVALVDGGSSNCALKKFVQDVVDNVP.

The active-site Proton acceptor is H15. H15 contributes to the an anthocyanidin binding site. Catalysis depends on D110, which acts as the Charge relay. Residues T132, A342, Q344, H359, W362, N363, S364, and E367 each contribute to the UDP-alpha-D-glucose site. Residue A382 participates in an anthocyanidin binding. Residues E383 and Q384 each coordinate UDP-alpha-D-glucose.

This sequence belongs to the UDP-glycosyltransferase family.

It catalyses the reaction a flavonol + UDP-alpha-D-glucose = a flavonol 3-O-beta-D-glucoside + UDP + H(+). Functionally, possesses quercetin 3-O-glucosyltransferase activity in vitro. Also active in vitro on benzoates and benzoate derivatives. This Arabidopsis thaliana (Mouse-ear cress) protein is UDP-glycosyltransferase 71B1 (UGT71B1).